A 945-amino-acid polypeptide reads, in one-letter code: Isoleucine--tRNA ligase (945 aa).

The 'HIGH' region signature appears at 66–76 (PYANGDIHLGH). Glu581 is a binding site for L-isoleucyl-5'-AMP. Residues 622 to 626 (KMSKS) carry the 'KMSKS' region motif. Lys625 lines the ATP pocket. Positions 908, 911, 928, and 931 each coordinate Zn(2+).

Belongs to the class-I aminoacyl-tRNA synthetase family. IleS type 1 subfamily. In terms of assembly, monomer. Zn(2+) serves as cofactor.

It localises to the cytoplasm. The catalysed reaction is tRNA(Ile) + L-isoleucine + ATP = L-isoleucyl-tRNA(Ile) + AMP + diphosphate. Functionally, catalyzes the attachment of isoleucine to tRNA(Ile). As IleRS can inadvertently accommodate and process structurally similar amino acids such as valine, to avoid such errors it has two additional distinct tRNA(Ile)-dependent editing activities. One activity is designated as 'pretransfer' editing and involves the hydrolysis of activated Val-AMP. The other activity is designated 'posttransfer' editing and involves deacylation of mischarged Val-tRNA(Ile). This Paraburkholderia phymatum (strain DSM 17167 / CIP 108236 / LMG 21445 / STM815) (Burkholderia phymatum) protein is Isoleucine--tRNA ligase.